Consider the following 146-residue polypeptide: Transcriptional regulator MraZ (146 aa).

SpoVT-AbrB domains lie at 9–55 (ASAL…PRPA) and 81–124 (AMDV…DVQR).

The protein belongs to the MraZ family. As to quaternary structure, forms oligomers.

Its subcellular location is the cytoplasm. It localises to the nucleoid. This is Transcriptional regulator MraZ from Methylibium petroleiphilum (strain ATCC BAA-1232 / LMG 22953 / PM1).